The following is a 148-amino-acid chain: Calmodulin (148 aa).

A2 bears the N-acetylalanine mark. 4 consecutive EF-hand domains span residues 8–43, 44–79, 81–116, and 116–148; these read DQIS…LGQN, PTEA…KMKD, DSEE…LGEK, and KLTD…MMAK. Residues D21, D23, D25, C27, E32, D57, D59, N61, T63, E68, D94, D96, N98, and E105 each coordinate Ca(2+). N6,N6,N6-trimethyllysine is present on K116. Ca(2+) is bound by residues D129, D131, D133, Q135, and E140.

The protein belongs to the calmodulin family.

Calmodulin mediates the control of a large number of enzymes, ion channels and other proteins by Ca(2+). Among the enzymes to be stimulated by the calmodulin-Ca(2+) complex are a number of protein kinases and phosphatases. The protein is Calmodulin (CAMF1) of Fagus sylvatica (Beechnut).